Here is a 1076-residue protein sequence, read N- to C-terminus: DNA-directed RNA polymerase subunit beta (1076 aa).

This sequence belongs to the RNA polymerase beta chain family. In plastids the minimal PEP RNA polymerase catalytic core is composed of four subunits: alpha, beta, beta', and beta''. When a (nuclear-encoded) sigma factor is associated with the core the holoenzyme is formed, which can initiate transcription.

It localises to the plastid. Its subcellular location is the chloroplast. The enzyme catalyses RNA(n) + a ribonucleoside 5'-triphosphate = RNA(n+1) + diphosphate. Its function is as follows. DNA-dependent RNA polymerase catalyzes the transcription of DNA into RNA using the four ribonucleoside triphosphates as substrates. This chain is DNA-directed RNA polymerase subunit beta, found in Agrostis stolonifera (Creeping bentgrass).